We begin with the raw amino-acid sequence, 373 residues long: CXADR-like membrane protein (373 aa).

The signal sequence occupies residues Met-1–Gly-18. Ig-like C2-type domains lie at Thr-19–Lys-127 and Pro-135–Thr-224. Residues Thr-19–Ala-235 are Extracellular-facing. 2 disulfides stabilise this stretch: Cys-35–Cys-111 and Cys-153–Cys-208. N-linked (GlcNAc...) asparagine glycosylation is found at Asn-74 and Asn-197. Residues Gly-236 to Ile-256 form a helical membrane-spanning segment. Residues Arg-257–Val-373 lie on the Cytoplasmic side of the membrane. Residues Tyr-264–Lys-281 are compositionally biased toward basic and acidic residues. Residues Tyr-264–Val-373 are disordered. Residues Ser-288 to Ser-314 are compositionally biased toward low complexity. The span at Lys-355–Val-373 shows a compositional bias: polar residues.

As to expression, predominantly expressed in epithelial cells within different tissues and in the white adipose tissue. Expressed at high levels in small intestine and placenta, at intermediate levels in the heart, skeletal muscle, colon, spleen, kidney and lung and at low levels in the liver and peripheral blood leukocytes. Highly abundant in the intestine during embryo and fetal development (at protein level).

The protein localises to the cell junction. It localises to the tight junction. It is found in the cell membrane. Its function is as follows. May be involved in the cell-cell adhesion. May play a role in adipocyte differentiation and development of obesity. Is required for normal small intestine development. The chain is CXADR-like membrane protein (CLMP) from Homo sapiens (Human).